Reading from the N-terminus, the 1215-residue chain is Homeodomain-interacting protein kinase 3 (1215 aa).

A Glycyl lysine isopeptide (Lys-Gly) (interchain with G-Cter in SUMO2) cross-link involves residue Lys-27. Residues 197 to 525 (YEVLDFLGRG…PAETLNHPFV (329 aa)) form the Protein kinase domain. ATP is bound by residues 203–211 (LGRGTFGQV) and Lys-226. The Proton acceptor role is filled by Asp-322. Phosphotyrosine is present on Tyr-359. An interaction with AR region spans residues 767–944 (QNRGILVKLM…NSMSDEEQES (178 aa)). The interaction with FAS stretch occupies residues 796-891 (NTNIPHSAFI…SQRHSLRECK (96 aa)). Residues 855–1011 (QTIIIADSPS…ENGLNADEHM (157 aa)) are required for localization to nuclear speckles. The tract at residues 866-918 (AVSVITISSDTDEEETSQRHSLRECKGSLDCEACQSTLNIDRMCSLSSPDSTL) is SUMO interaction motifs (SIM); required for nuclear localization and kinase activity. The interval 870–880 (ITISSDTDEEE) is interaction with UBL1. Residues 912 to 929 (SSPDSTLSTSSSGQSSPS) show a composition bias toward low complexity. The tract at residues 912–987 (SSPDSTLSTS…ELVSSADTET (76 aa)) is disordered. Residues 945–957 (SCDTVDGSPTSDS) show a composition bias toward polar residues. A Glycyl lysine isopeptide (Lys-Gly) (interchain with G-Cter in SUMO) cross-link involves residue Lys-1208.

It belongs to the protein kinase superfamily. CMGC Ser/Thr protein kinase family. HIPK subfamily. Interacts with Nkx1-2. Interacts with FAS and DAXX. Probably part of a complex consisting of HIPK3, FAS and FADD. Interacts with and stabilizes ligand-bound androgen receptor (AR). Interacts with UBL1/SUMO-1. Binds to NR5A1/SF1, SPEN/MINT and RUNX2. In terms of processing, autophosphorylated, but autophosphorylation is not required for catalytic activity. Post-translationally, may be sumoylated. In terms of tissue distribution, overexpressed in multidrug resistant cells. Highly expressed in heart and skeletal muscle, and at lower levels in placenta, pancreas, brain, spleen, prostate, thymus, testis, small intestine, colon and leukocytes. Not found in liver and lung.

It localises to the cytoplasm. Its subcellular location is the nucleus. It catalyses the reaction L-seryl-[protein] + ATP = O-phospho-L-seryl-[protein] + ADP + H(+). The enzyme catalyses L-threonyl-[protein] + ATP = O-phospho-L-threonyl-[protein] + ADP + H(+). Its function is as follows. Serine/threonine-protein kinase involved in transcription regulation, apoptosis and steroidogenic gene expression. Phosphorylates JUN and RUNX2. Seems to negatively regulate apoptosis by promoting FADD phosphorylation. Enhances androgen receptor-mediated transcription. May act as a transcriptional corepressor for NK homeodomain transcription factors. The phosphorylation of NR5A1 activates SF1 leading to increased steroidogenic gene expression upon cAMP signaling pathway stimulation. In osteoblasts, supports transcription activation: phosphorylates RUNX2 that synergizes with SPEN/MINT to enhance FGFR2-mediated activation of the osteocalcin FGF-responsive element (OCFRE). The sequence is that of Homeodomain-interacting protein kinase 3 (HIPK3) from Homo sapiens (Human).